Reading from the N-terminus, the 333-residue chain is Homeobox protein HMX1 (333 aa).

Disordered stretches follow at residues 1–74 (MAQD…STSA), 86–109 (GTEG…APRC), and 139–204 (CASP…KKKT). Residues 17 to 30 (DYTQGNTDRSTAAA) show a composition bias toward polar residues. Gly residues predominate over residues 87 to 105 (TEGGGGTRRAAAGGGGGRG). Positions 144 to 158 (TSDRDSPELPEDTER) are enriched in basic and acidic residues. Residues 159–176 (AGGGGRAAARGPAGGRQS) show a composition bias toward gly residues. The segment covering 181–192 (EEEEERGEEAGE) has biased composition (acidic residues). A DNA-binding region (homeobox) is located at residues 201 to 260 (KKKTRTVFSRSQVFQLESTFDVKRYLSSSERAGLAASLHLTETQVKIWFQNRRNKWKRQL). The HMX family specific domain 1 signature appears at 261–271 (AADLEAANLSH).

It belongs to the HMX homeobox family.

Its subcellular location is the nucleus. In terms of biological role, DNA-binding protein that binds to the 5'-CAAG-3' core sequence. May function as a transcriptional repressor. Seems to act as a transcriptional antagonist of NKX2-5. May play an important role in the development of craniofacial structures such as the eye and ear. The sequence is that of Homeobox protein HMX1 (HMX1) from Gallus gallus (Chicken).